A 632-amino-acid polypeptide reads, in one-letter code: Epsin-3 (632 aa).

Residues Arg-8, Lys-11, Arg-25, Asn-30, Arg-63, and His-73 each contribute to the a 1,2-diacyl-sn-glycero-3-phospho-(1D-myo-inositol-4,5-bisphosphate) site. The ENTH domain maps to 12-144 (NIVHNYSEAE…KDEERLRQER (133 aa)). Residues 172 to 214 (YGEDYSRSRGSPSSYNSSSSSPRYTSDLEQARPQTSGEEELQL) are disordered. Positions 179 to 196 (SRGSPSSYNSSSSSPRYT) are enriched in low complexity. Phosphoserine is present on residues Ser-191 and Ser-192. 2 UIM domains span residues 209–228 (EEEL…AEKP) and 236–255 (DEDL…HEKE). Residues 257–296 (RSWQGDGSPMANGAGAVVHHQRDREPEREERKEEEKLKTS) are disordered. The residue at position 264 (Ser-264) is a Phosphoserine. The span at 276–294 (HQRDREPEREERKEEEKLK) shows a compositional bias: basic and acidic residues. 8 tandem repeats follow at residues 321–323 (DPW), 344–346 (DPW), 371–373 (EPW), 387–389 (DPW), 404–406 (DPW), 524–526 (NPF), 537–539 (NPF), and 629–631 (NPF). The interval 321–406 (DPWDIPGFRP…KLPSTGADPW (86 aa)) is 5 X 3 AA repeats of [DE]-P-W. Disordered stretches follow at residues 326 to 501 (PGFR…SFLG), 525 to 560 (PFLT…PALG), and 604 to 632 (AFAP…NPFL). Positions 353–371 (TVLSRSQPWDLTPMLSSSE) are enriched in polar residues. Residues 524–631 (NPFLTGLSAP…PPPQTGTNPF (108 aa)) are 3 X 3 AA repeats of N-P-F.

The protein belongs to the epsin family. In terms of tissue distribution, detected in migrating keratinocytes from wounded skin, but not in differentiating keratinocytes or in normal skin. Detected in chronic wounds, basal cell carcinoma and ulcerative colitis.

It localises to the cytoplasm. It is found in the perinuclear region. The protein localises to the cytoplasmic vesicle. Its subcellular location is the clathrin-coated vesicle. The protein resides in the nucleus. This is Epsin-3 (EPN3) from Homo sapiens (Human).